Reading from the N-terminus, the 596-residue chain is MLPRNSHYKGTAYVHGKASGPLIASNLELSFWGGVDPQTSQVIDHHHPLSGEFLQDAILAIPSGRGSCSGSGVLLELLLSGKGPKALIFSRREDILTLGVVVAEEIFGRSIPVVVLAVTDFEELLAARYVAVNGGTVSTVQLGDAMHSPEDDSTEPLDTTLGLSIELSNKDYAFLSGAHGQAAQAAMRIILRMAAMEGARKLIDITQVHIDGCVYTGPASLKFAETLRDWGGKVVTPTTLNSIFVDQRRWRAQGVPSVFGEAAEKLATAYTDMGALPTYTCAPYLLPSAPKRGEQVAWAESNAVVYANSVLGAKTMKYPDFLDICIALTGRAPYGGLHIESNRSASLCVELPVLQKADIDDSFYPLLGYHVGRIAGSRIPVVVGVDVLRPSRDDLKAFGAAFATMASAPMFHIVGVTPEAATLQDAIGRREGVECIRLDVTELQTVWRTLNSAEDNSPVDLISLGNPHFSIAELRRLASLCRGRAKHDKVAVMVTCARATYGLADQAGLIEELHRFGVEVITDTCWCMIGEPVIPTTSRTIMTNSAKYAHYGPGLTGRRFYFGSLARCVDAACDGYFDTKMPGFISSCIPKGAGVR.

The active-site Proton acceptor is Ser-67.

This sequence belongs to the AcnX family. As to quaternary structure, monomer. The cofactor is Fe(3+).

The enzyme catalyses cis-3-hydroxy-L-proline = 1-pyrroline-2-carboxylate + H2O. With respect to regulation, inhibited by Zn(2+). Not inhibited by pyrrole-2-carboxylate nor its derivative 2-thiophenecarboxylate. Catalyzes the dehydration of cis-3-hydroxy-L-proline (c3LHyp) to Delta(1)-pyrroline-2-carboxylate (Pyr2C). No activity with L-proline, trans-4-hydroxy-L-proline (t4LHyp), cis-4-hydroxy-L-proline (c4LHyp), trans-3-hydroxy-L-proline (t3LHyp), D-proline, cis-4-hydroxy-D-proline (c4DHyp), trans-4-hydroxy-D-proline (t4DHyp) or L-serine as substrates. Because of the low catalytic efficiency, C3LHyp is likely not a main physiological substrate of this enzyme in H.jecorina. The polypeptide is Cis-3-hydroxy-L-proline dehydratase (Hypocrea jecorina (strain QM6a) (Trichoderma reesei)).